We begin with the raw amino-acid sequence, 615 residues long: Chaperone protein HscA (615 aa).

The protein belongs to the heat shock protein 70 family.

Functionally, chaperone involved in the maturation of iron-sulfur cluster-containing proteins. Has a low intrinsic ATPase activity which is markedly stimulated by HscB. Involved in the maturation of IscU. The sequence is that of Chaperone protein HscA from Xenorhabdus nematophila (strain ATCC 19061 / DSM 3370 / CCUG 14189 / LMG 1036 / NCIMB 9965 / AN6).